Consider the following 48-residue polypeptide: uncharacterized protein (48 aa).

This is an uncharacterized protein from Methanocaldococcus jannaschii (strain ATCC 43067 / DSM 2661 / JAL-1 / JCM 10045 / NBRC 100440) (Methanococcus jannaschii).